Reading from the N-terminus, the 188-residue chain is Mediator of RNA polymerase II transcription subunit 29 (188 aa).

Composition is skewed to low complexity over residues M1–P23 and V30–Q43. The tract at residues M1–Q43 is disordered.

This sequence belongs to the Mediator complex subunit 29 family. As to quaternary structure, component of the Mediator complex. Self-associates. Interacts with dsx.

It localises to the nucleus. Its function is as follows. Component of the Mediator complex, a coactivator involved in the regulated transcription of nearly all RNA polymerase II-dependent genes. Mediator functions as a bridge to convey information from gene-specific regulatory proteins to the basal RNA polymerase II transcription machinery. Mediator is recruited to promoters by direct interactions with regulatory proteins and serves as a scaffold for the assembly of a functional preinitiation complex with RNA polymerase II and the general transcription factors. Required for female somatic sexual development. The sequence is that of Mediator of RNA polymerase II transcription subunit 29 (ix) from Drosophila melanogaster (Fruit fly).